Here is a 447-residue protein sequence, read N- to C-terminus: GTPase Der (447 aa).

2 consecutive EngA-type G domains span residues 3–167 (PVIA…FAER) and 181–354 (TRIA…AAAM). Residues 9-16 (GRPNVGKS), 56-60 (DTGGF), 119-122 (NKAE), 187-194 (GRPNVGKS), 234-238 (DTAGL), and 299-302 (NKWD) each bind GTP. The 85-residue stretch at 355–439 (VKLPTPKLTR…PLRIEFRTNK (85 aa)) folds into the KH-like domain.

It belongs to the TRAFAC class TrmE-Era-EngA-EngB-Septin-like GTPase superfamily. EngA (Der) GTPase family. In terms of assembly, associates with the 50S ribosomal subunit.

Functionally, GTPase that plays an essential role in the late steps of ribosome biogenesis. This chain is GTPase Der, found in Ralstonia pickettii (strain 12J).